The sequence spans 570 residues: MRVVTKLLYLVVLAICGLGIHGALTHTRVTPPVYPSVSFNLTGADTYGPFLRALQEKVILGNHTAFDLPVLNPESQVSDSNRFVLVPLTNPSGDTVTLAIDVVNLYVVAFSSNGRSYFFSGSTAVQRDNLFVDTTQEELNFTGNYISLERQVGFGRVYIPLGPKSLAQAISSLRTYTLSAGDTKPLARGLLVVIQMVSEAARFRYIELRIRTSITDASEFTPDLLMLSMENNWSSMSSEIQQAQPGGIFPGVVQLRDERNNPIEVTNFRRLFELTYIAVLLYGCAPVTSNSYTNNAIDAQIIKMPVFRGGGYEKVCSVVEVTRRISGWDGLCVDVRDGHYIDGNTVQLGPCGNECNQLWTFRTDGTIRWLGKCLTTSSSVMIYDCNTVPPEATKWVVSTDGTITNPRSGLVLTAPQAAEGTALSLENNIHAARQGWTVGDVEPLVTFIVGYKQMCLTENGENNFVWLEDCVLNRVEQEWALYGDGTIRVNSNRSLCVTSEDHEPSDLIVILKCEGSGNQRWVFNTNGTISNPNAKLVMDVAQSNVSLRKIILYPPTGNPNQQWITTTQPA.

Residues 1 to 28 (MRVVTKLLYLVVLAICGLGIHGALTHTR) form the signal peptide. Residues Asn-40, Asn-62, and Asn-140 are each glycosylated (N-linked (GlcNAc...) asparagine). Glu-199 is a catalytic residue. An N-linked (GlcNAc...) asparagine glycan is attached at Asn-232. Intrachain disulfides connect Cys-284–Cys-316, Cys-332–Cys-351, and Cys-373–Cys-385. Ricin B-type lectin domains are found at residues 319–439 (VEVT…WTVG) and 441–566 (VEPL…WITT). Residues 329–369 (DGLCVDVRDGHYIDGNTVQLGPCGNECNQLWTFRTDGTIRW) form a 1-alpha repeat. The 1-beta repeat unit spans residues 370–405 (LGKCLTTSSSVMIYDCNTVPPEATKWVVSTDGTITN). The stretch at 408–440 (SGLVLTAPQAAEGTALSLENNIHAARQGWTVGD) is one 1-gamma repeat. Residues 452-489 (KQMCLTENGENNFVWLEDCVLNRVEQEWALYGDGTIRV) form a 2-alpha repeat. Cys-455 and Cys-470 form a disulfide bridge. The N-linked (GlcNAc...) asparagine glycan is linked to Asn-492. One copy of the 2-beta repeat lies at 493–531 (RSLCVTSEDHEPSDLIVILKCEGSGNQRWVFNTNGTISN). Cys-496 and Cys-513 are disulfide-bonded. Asn-526 and Asn-544 each carry an N-linked (GlcNAc...) asparagine glycan. The 2-gamma repeat unit spans residues 534-567 (AKLVMDVAQSNVSLRKIILYPPTGNPNQQWITTT).

It belongs to the ribosome-inactivating protein family. Type 2 RIP subfamily. As to quaternary structure, tetramer of four pairs of disulfide bound A-B chains. In terms of processing, the precursor is processed in two chains, A and B, that are linked by a disulfide bond. A small truncated form corresponding roughly to the second ricin B-type lectin domain of the B chain, TrSNAIf, can also be produced. N-glycosylated. Expressed in fruits.

It catalyses the reaction Endohydrolysis of the N-glycosidic bond at one specific adenosine on the 28S rRNA.. Functionally, neu5Ac(alpha2-6)Gal/GalNAc specific agglutinin. Behaves as a type-2 ribosome-inactivating protein. Strongly inhibits mammalian but not plant ribosomes. The A chain is responsible for inhibiting protein synthesis through the catalytic inactivation of 60S ribosomal subunits by removing adenine from position 4,324 of 28S rRNA. The B chain binds to cell receptors and probably facilitates the entry into the cell of the A chain; B chains are also responsible for cell agglutination (lectin activity). Involved in plant defense against insects. Binds Neu5Ac(alpha2-6)Gal/GalNAc but has no clear agglutination activity. This Sambucus nigra (European elder) protein is Ribosome-inactivating protein SNAIf.